We begin with the raw amino-acid sequence, 1091 residues long: Multiple epidermal growth factor-like domains protein 11 (1091 aa).

A signal peptide spans 1–18 (MAPSAVGLLVFLLQAALA). At 19–847 (LNPEDPNVCS…SPALGAERHS (829 aa)) the chain is on the extracellular side. The 78-residue stretch at 23-100 (DPNVCSHWES…YYENGDFCIP (78 aa)) folds into the EMI domain. 14 disulfide bridges follow: Cys27–Cys88, Cys53–Cys62, Cys87–Cys98, Cys102–Cys117, Cys119–Cys128, Cys145–Cys153, Cys147–Cys160, Cys162–Cys171, Cys184–Cys196, Cys190–Cys203, Cys205–Cys214, Cys227–Cys239, Cys233–Cys246, and Cys248–Cys257. EGF-like domains follow at residues 94–129 (NGDFCIPLCTEECMHGRCVSPDTCHCEPGWGGPDCS), 142–172 (SNRCQCQNGALCNPITGACVCAPGFRGWRCE), 180–215 (HGKGCQLLCQCHHGASCDPRTGECLCAPGYTGVYCE), 223–258 (HGAHCELRCPCQNGGTCHHITGECACPPGWTGAVCA), 266–301 (FGQNCSQDCPCHHGGQCDHVTGQCHCTAGYMGDRCQ), 314–344 (SQRCDCHNGGQCSPATGACECEPGYKGPSCQ), 398–433 (YGNGCQLPCTCQNGADCHSITGSCTCAPGFMGEVCA), 441–476 (YGPNCSSVCSCSNGGTCSPVDGSCTCREGWQGLDCS), and 484–519 (WGLNCNETCICANGAACSPFDGSCACTPGWLGDSCE). Residue Asn269 is glycosylated (N-linked (GlcNAc...) asparagine). Cystine bridges form between Cys270-Cys282, Cys276-Cys289, Cys291-Cys300, Cys317-Cys325, Cys319-Cys332, Cys334-Cys343, Cys402-Cys414, Cys408-Cys421, Cys423-Cys432, Cys445-Cys457, Cys451-Cys464, Cys466-Cys475, Cys488-Cys500, Cys494-Cys507, and Cys509-Cys518. A glycan (N-linked (GlcNAc...) asparagine) is linked at Asn530. 6 EGF-like domains span residues 570–605 (WGPNCSVSCSCENGGSCSPEDGSCECAPGFRGPLCQ), 613–650 (YGHGCAQPCPLCVHSRGPCHHISGICECLPGFSGALCN), 658–693 (FGQDCAQLCSCANNGTCSPIDGSCQCFPGWIGKDCS), 706–736 (FHTCSCHNGASCSAEDGACHCTPGWTGLFCT), 749–779 (GHICQCQNGASCDHITGKCTCRTGFSGRHCE), and 787–822 (FGYGCQQLCECMNNATCDHVTGTCYCSPGFKGIRCD). Intrachain disulfides connect Cys574/Cys586, Cys580/Cys593, Cys595/Cys604, Cys617/Cys631, Cys621/Cys638, Cys640/Cys649, Cys662/Cys674, Cys668/Cys681, Cys683/Cys692, Cys709/Cys717, Cys711/Cys724, Cys726/Cys735, Cys752/Cys760, Cys754/Cys767, Cys769/Cys778, Cys791/Cys803, Cys797/Cys810, and Cys812/Cys821. The chain crosses the membrane as a helical span at residues 848-868 (VGAVTGIVLLLFLVVVLLGLF). Topologically, residues 869–1091 (AWRRRRQKEK…NIYEVGRCLT (223 aa)) are cytoplasmic.

Belongs to the MEGF family. In terms of assembly, homomer. Does not interact with MEGF10.

It localises to the cell membrane. Its subcellular location is the basolateral cell membrane. In terms of biological role, may regulate the mosaic spacing of specific neuron subtypes in the retina through homotypic retinal neuron repulsion. Mosaics provide a mechanism to distribute each cell type evenly across the retina, ensuring that all parts of the visual field have access to a full set of processing elements. The sequence is that of Multiple epidermal growth factor-like domains protein 11 (Megf11) from Mus musculus (Mouse).